The chain runs to 101 residues: MAKTSMKAREAKRAQLVTKYAEKRLALKAIISAPATSEEDRWDAVLKLQALPRDSSLSRKRNRCSQTGRPHGFLRKFGLSRIKLREATMRGEVPGLRKASW.

Belongs to the universal ribosomal protein uS14 family. As to quaternary structure, part of the 30S ribosomal subunit. Contacts proteins S3 and S10.

In terms of biological role, binds 16S rRNA, required for the assembly of 30S particles and may also be responsible for determining the conformation of the 16S rRNA at the A site. This Shewanella denitrificans (strain OS217 / ATCC BAA-1090 / DSM 15013) protein is Small ribosomal subunit protein uS14.